A 255-amino-acid chain; its full sequence is Electron transfer flavoprotein beta subunit lysine methyltransferase (255 aa).

Residues 1 to 32 (MAFSLCWKAPRSQWSFLQALNSGFPLFPWRTV) constitute a mitochondrion transit peptide.

The protein belongs to the methyltransferase superfamily. ETFBKMT family. As to quaternary structure, interacts with HSPD1; this protein may possibly be a methylation substrate.

Its subcellular location is the cytoplasm. The protein resides in the mitochondrion matrix. It carries out the reaction L-lysyl-[protein] + 3 S-adenosyl-L-methionine = N(6),N(6),N(6)-trimethyl-L-lysyl-[protein] + 3 S-adenosyl-L-homocysteine + 3 H(+). Functionally, protein-lysine methyltransferase that selectively trimethylates the flavoprotein ETFB in mitochondria. Thereby, may negatively regulate the function of ETFB in electron transfer from Acyl-CoA dehydrogenases to the main respiratory chain. The polypeptide is Electron transfer flavoprotein beta subunit lysine methyltransferase (Rattus norvegicus (Rat)).